Consider the following 340-residue polypeptide: Protein B17 (340 aa).

It belongs to the orthopoxvirus B17 protein family.

The polypeptide is Protein B17 (Vaccinia virus (strain Western Reserve) (VACV)).